The chain runs to 283 residues: Methyltransferase cpsF (283 aa).

Belongs to the methyltransferase superfamily. LaeA methyltransferase family.

The enzyme catalyses campesine A + S-adenosyl-L-methionine = campesine B + S-adenosyl-L-homocysteine + H(+). The protein operates within alkaloid biosynthesis. Functionally, methyltransferase; part of the gene cluster that mediates the biosynthesis of campesine G, a dimeric indole piperazine alkaloid that shows good insecticidal activity Galleria mellonella. Within the pathway, cpsF methylates campesine A at N13 of piperazine ring to produce campesine B. The non-canonical non-ribosomal peptide synthetase cpsA catalyzes the first steps of the pathway by producing L-tryptophanal and L-valinal from their respective amino-acids. These products condensate spontaneously to form trypyl-valyl pyrazine also known as didehydrocampesine A. The NmrA-like family domain-containing oxidoreductase cpsB is the next enzyme in cps pathway and reduces the unstable didehydrocampesine A to campesine A. The methyltransferase cpsF and the acetyltransferase cpsE both recognize N13 of piperazine ring to carry out methylation and acetylation of campesine A to produce campesine C and B, respectively. The cytochrome P450 monooxygenase cpsD then acts as a dimerase that catalyzes oxidative heterocoupling between campesine B and C to produce heterodimers with unexpected 6/5/6/6/6/6/5/6 eight-ring scaffold called campesine D. Finally,the cytochrome P450 monooxygenase cpsC is a regioselective dehydrogenase that catalyzes dehydrogenation reaction towards C2-N1 to produce campesine G. The sequence is that of Methyltransferase cpsF from Aspergillus campestris (strain IBT 28561).